The primary structure comprises 97 residues: Insertion element IS2 uncharacterized 11.1 kDa protein (97 aa).

This is Insertion element IS2 uncharacterized 11.1 kDa protein from Escherichia coli.